We begin with the raw amino-acid sequence, 407 residues long: 3-oxoacyl-[acyl-carrier-protein] synthase 1 (407 aa).

The region spanning 1–406 is the Ketosynthase family 3 (KS3) domain; that stretch reads MKRVVITGFG…GTNVSLILKK (406 aa). Catalysis depends on for beta-ketoacyl synthase activity residues cysteine 164, histidine 300, and histidine 336.

The protein belongs to the thiolase-like superfamily. Beta-ketoacyl-ACP synthases family. As to quaternary structure, homodimer.

It is found in the cytoplasm. The enzyme catalyses a fatty acyl-[ACP] + malonyl-[ACP] + H(+) = a 3-oxoacyl-[ACP] + holo-[ACP] + CO2. It carries out the reaction (3Z)-decenoyl-[ACP] + malonyl-[ACP] + H(+) = 3-oxo-(5Z)-dodecenoyl-[ACP] + holo-[ACP] + CO2. The protein operates within lipid metabolism; fatty acid biosynthesis. In terms of biological role, involved in the type II fatty acid elongation cycle. Catalyzes the elongation of a wide range of acyl-ACP by the addition of two carbons from malonyl-ACP to an acyl acceptor. Can also use unsaturated fatty acids. Catalyzes a key reaction in unsaturated fatty acid (UFA) synthesis, the elongation of the cis-3-decenoyl-ACP produced by FabA. This is 3-oxoacyl-[acyl-carrier-protein] synthase 1 (fabB) from Buchnera aphidicola subsp. Schizaphis graminum (strain Sg).